A 425-amino-acid chain; its full sequence is MESLKRWNEERGLWCEKGVQVLLTTVGAFAAFGLMTIAISTDYWLYTRALICNTTNLTAGGDDGTPHRGGGGASEKKDPGGLTHSGLWRICCLEGLKRGVCVKINHFPEDTDYDHDSAEYLLRVVRASSIFPILSAILLLLGGVCVAASRVYKSKRNIILGAGILFVAAGLSNIIGVIVYISANAGEPGPKRDEEKKNHYSYGWSFYFGGLSFILAEVIGVLAVNIYIERSREAHCQSRSDLLKAGGGAGGSGGSGPSAILRLPSYRFRYRRRSRSSSRSSEPSPSRDASPGGPGGPGFASTDISMYTLSRDPSKGSVAAGLAGAGGGGGGAVGAFGGAAGGAGGGGGGGGGAGAERDRGGASGFLTLHNAFPKEAGGGVTVTVTGPPAPPAPAPPAPSAPAPGTLAKEAAASNTNTLNRKTTPV.

4 consecutive transmembrane segments (helical) span residues 19-39, 129-149, 158-178, and 208-228; these read VQVLLTTVGAFAAFGLMTIAI, SIFPILSAILLLLGGVCVAAS, IILGAGILFVAAGLSNIIGVI, and FGGLSFILAEVIGVLAVNIYI. 2 positions are modified to phosphoserine: Ser252 and Ser255. The interval 272-304 is disordered; sequence RRSRSSSRSSEPSPSRDASPGGPGGPGFASTDI. Over residues 277–287 the composition is skewed to low complexity; that stretch reads SSRSSEPSPSR. The chain crosses the membrane as a helical span at residues 318–338; the sequence is VAAGLAGAGGGGGGAVGAFGG. A compositionally biased stretch (gly residues) spans 343 to 354; the sequence is AGGGGGGGGGAG. Disordered stretches follow at residues 343–365 and 377–425; these read AGGGGGGGGGAGAERDRGGASGF and GGGV…TTPV. Pro residues predominate over residues 387–401; the sequence is PPAPPAPAPPAPSAP. Positions 412–425 are enriched in polar residues; sequence ASNTNTLNRKTTPV.

It belongs to the PMP-22/EMP/MP20 family. CACNG subfamily. In terms of assembly, interacts with CACNA1C. Identified in a complex with the L-type calcium channel subunits CACNA1C, CACNA2D1 and either CACNB1 or CACNB2. Acts as an auxiliary subunit for AMPA-selective glutamate receptors (AMPARs). Found in a complex with GRIA1, GRIA2, GRIA3, GRIA4, CNIH2, CNIH3, CACNG2, CACNG3, CACNG4, CACNG5 and CACNG7. Interacts with CNIH2. Found in a complex with GRIA1, GRIA2, GRIA3, GRIA4, DLG4 and CNIH2. Post-translationally, palmitoylated. Probably palmitoylated by ZDHHC3 and ZDHHC7. As to expression, detected in heart left ventricle.

It is found in the cell membrane. The protein localises to the postsynaptic density membrane. Its function is as follows. Regulates the activity of L-type calcium channels that contain CACNA1C as pore-forming subunit. Regulates the trafficking and gating properties of AMPA-selective glutamate receptors (AMPARs). Promotes their targeting to the cell membrane and synapses and modulates their gating properties by slowing their rates of activation, deactivation and desensitization and by mediating their resensitization. Does not show subunit-specific AMPA receptor regulation and regulates all AMPAR subunits. The polypeptide is Voltage-dependent calcium channel gamma-8 subunit (Homo sapiens (Human)).